The sequence spans 240 residues: Proteasome subunit beta 1 (240 aa).

Positions 1 to 46 (MRDMTPGPDLSGPQAADEFQSDPYAPEVGELPEQSAQDSEKVNKTG) are cleaved as a propeptide — removed in mature form; by autocatalysis. The segment at 1-48 (MRDMTPGPDLSGPQAADEFQSDPYAPEVGELPEQSAQDSEKVNKTGTT) is disordered. The Nucleophile role is filled by Thr47.

This sequence belongs to the peptidase T1B family. In terms of assembly, the 20S proteasome core is composed of 14 alpha and 14 beta subunits that assemble into four stacked heptameric rings, resulting in a barrel-shaped structure. The two inner rings, each composed of seven catalytic beta subunits, are sandwiched by two outer rings, each composed of seven alpha subunits. The catalytic chamber with the active sites is on the inside of the barrel. Has a gated structure, the ends of the cylinder being occluded by the N-termini of the alpha-subunits. Is capped at one or both ends by the proteasome regulatory ATPase, PAN.

The protein resides in the cytoplasm. It catalyses the reaction Cleavage of peptide bonds with very broad specificity.. With respect to regulation, the formation of the proteasomal ATPase PAN-20S proteasome complex, via the docking of the C-termini of PAN into the intersubunit pockets in the alpha-rings, triggers opening of the gate for substrate entry. Interconversion between the open-gate and close-gate conformations leads to a dynamic regulation of the 20S proteasome proteolysis activity. In terms of biological role, component of the proteasome core, a large protease complex with broad specificity involved in protein degradation. This is Proteasome subunit beta 1 from Haloarcula marismortui (strain ATCC 43049 / DSM 3752 / JCM 8966 / VKM B-1809) (Halobacterium marismortui).